An 83-amino-acid chain; its full sequence is uncharacterized protein (83 aa).

Belongs to the chlamydial CPn_0711/CT_665/TC_0036 family.

This is an uncharacterized protein from Chlamydia trachomatis serovar D (strain ATCC VR-885 / DSM 19411 / UW-3/Cx).